A 1356-amino-acid polypeptide reads, in one-letter code: MDLKEKHLGEPPSALGLSTRKALSVLKEQLEAVLEGHLRERKKCLTWKEVWRSSFLHHSNRCSCFHWPGASLMLLAVLLLLGCCGGQPAGSRGVGLVNASALFLLLLLNLVLIGRQDRLKRREVERRLRGIIDQIQDALRDGREIQWPSAMYPDLHMPFAPSWSLHWAYRDGHLVNLPVSLLVEGDIIALRPGQESFASLRGIKDDEHIVLEPGDLFPPFSPPPSPRGEVERGPQSPQQHRLFRVLETPVIDNIRWCLDMALSRPVTALDNERFTVQSVMLHYAVPVVLAGFLITNALRFIFSAPGVTSWQYTLLQLQVNGVLPILPLLFPVLWVLATACGEARVLAQMSKASPSSLLAKFSEDTLSSYTEAVSSQEMLRCIWGHFLRVLGGTSPTLSHSSSLLHSLGSVTVLCCVDKQGILSWPNPSPETVLFFSGKVEPPHSSHEDLTDGLSTRSFCHPEPHERDALLAGSLNNTLHLSNEQERGDWPGEAPKPPEPYSHHKAHGRSKHPSGSNVSFSRDTEGGEEEPSKTQPGMESDPYEAEDFVCDYHLEMLSLSQDQQNPSCIQFDDSNWQLHLTSLKPLGLNVLLNLCDASVTERLCRFSDHLCNIALQESHSAVLPVHVPWGLCELARLIGFTPGAKELFKQENHLALYRLPSAETMKETSLGRLSCVTKRRPPLSHMISLFIKDTTTSTEQMLSHGTADVVLEACTDFWDGADIYPLSGSDRKKVLDFYQRACLSGYCSAFAYKPMNCALSSQLNGKCIELVQVPGQSSIFTMCELPSTIPIKQNARRSSWSSDEGIGEVLEKEDCMQALSGQIFMGMVSSQYQARLDIVRLIDGLVNACIRFVYFSLEDELKSKVFAEKMGLETGWNCHISLTPNGDMPGSEIPPSSPSHAGSLHDDLNQVSRDDAEGLLLMEEEGHSDLISFQPTDSDIPSFLEDSNRAKLPRGIHQVRPHLQNIDNVPLLVPLFTDCTPETMCEMIKIMQEYGEVTCCLGSSANLRNSCLFLQSDISIALDPLYPSRCSWETFGYATSISMAQASDGLSPLQLSGQLNSLPCSLTFRQEETISIIRLIEQARHATYGIRKCFLFLLQCQLTLVVIQFLSCLVQLPPLLSTTDILWLSCFCYPLLSISLLGKPPHSSIMSMATGKNLQSIPKKTQHYFLLCFLLKFSLTISSCLICFGFTLQSFCDSSRDRNLTNCSSVMLPSNDDRAPAWFEDFANGLLSAQKLTAALIVLHTVFISITHVHRTKPLWRKSPLTNLWWAVTVPVVLLGQVVQTAVDLQLWTHRDSHVHFGLEDVPLLTWLLGCLSLVLVVVTNEIVKLHEIRVRVRYQKRQKLQFETKLGMNSPF.

Residues 1 to 64 (MDLKEKHLGE…FLHHSNRCSC (64 aa)) lie on the Cytoplasmic side of the membrane. Residues 65–85 (FHWPGASLMLLAVLLLLGCCG) traverse the membrane as a helical segment. Residues 86 to 92 (GQPAGSR) lie on the Lumenal side of the membrane. The helical transmembrane segment at 93 to 113 (GVGLVNASALFLLLLLNLVLI) threads the bilayer. Topologically, residues 114–273 (GRQDRLKRRE…RPVTALDNER (160 aa)) are cytoplasmic. 2 positions are modified to phosphoserine: S221 and S225. A helical transmembrane segment spans residues 274–294 (FTVQSVMLHYAVPVVLAGFLI). Residues 295–320 (TNALRFIFSAPGVTSWQYTLLQLQVN) are Lumenal-facing. The chain crosses the membrane as a helical span at residues 321–341 (GVLPILPLLFPVLWVLATACG). The Cytoplasmic segment spans residues 342-1092 (EARVLAQMSK…RHATYGIRKC (751 aa)). The DKQGIL motif lies at 417 to 422 (DKQGIL). Disordered stretches follow at residues 439 to 461 (VEPPHSSHEDLTDGLSTRSFCHP) and 483 to 541 (EQER…ESDP). The segment covering 440-449 (EPPHSSHEDL) has biased composition (basic and acidic residues). Phosphoserine is present on residues S444, S445, and S454. Residues 502–511 (HHKAHGRSKH) are compositionally biased toward basic residues. A phosphoserine mark is found at S513, S518, S798, and S941. A helical transmembrane segment spans residues 1093–1113 (FLFLLQCQLTLVVIQFLSCLV). The Lumenal segment spans residues 1114–1120 (QLPPLLS). The chain crosses the membrane as a helical span at residues 1121–1141 (TTDILWLSCFCYPLLSISLLG). Over 1142–1167 (KPPHSSIMSMATGKNLQSIPKKTQHY) the chain is Cytoplasmic. A helical membrane pass occupies residues 1168-1188 (FLLCFLLKFSLTISSCLICFG). The Lumenal segment spans residues 1189-1228 (FTLQSFCDSSRDRNLTNCSSVMLPSNDDRAPAWFEDFANG). N-linked (GlcNAc...) asparagine glycosylation is found at N1202 and N1205. Residues 1229 to 1249 (LLSAQKLTAALIVLHTVFISI) form a helical membrane-spanning segment. The Cytoplasmic segment spans residues 1250-1261 (THVHRTKPLWRK). Residues 1262–1282 (SPLTNLWWAVTVPVVLLGQVV) traverse the membrane as a helical segment. Residues 1283 to 1306 (QTAVDLQLWTHRDSHVHFGLEDVP) are Lumenal-facing. The helical transmembrane segment at 1307-1327 (LLTWLLGCLSLVLVVVTNEIV) threads the bilayer. The Cytoplasmic portion of the chain corresponds to 1328 to 1356 (KLHEIRVRVRYQKRQKLQFETKLGMNSPF). The short motif at 1351–1353 (GMN) is the GMN; metal-binding motif element.

In terms of assembly, forms homooligomers. In terms of tissue distribution, expressed ubiquitously.

The protein resides in the endoplasmic reticulum membrane. Could function in the uptake of Mg(2+) from the cytosol into the endoplasmic reticulum and regulate intracellular Mg(2+) homeostasis. This Homo sapiens (Human) protein is Transmembrane protein 94.